The chain runs to 436 residues: GTPase Der (436 aa).

EngA-type G domains are found at residues 4–167 and 175–351; these read PTIA…PNTS and IKFS…MNQN. Residues 10 to 17, 57 to 61, 119 to 122, 181 to 188, 229 to 233, and 294 to 297 contribute to the GTP site; these read GRPNVGKS, DTGGI, NKVD, DTAGM, and NKWD. The 85-residue stretch at 352-436 folds into the KH-like domain; that stretch reads LRIPSALLND…PIKIIPRRRK (85 aa).

The protein belongs to the TRAFAC class TrmE-Era-EngA-EngB-Septin-like GTPase superfamily. EngA (Der) GTPase family. As to quaternary structure, associates with the 50S ribosomal subunit.

In terms of biological role, GTPase that plays an essential role in the late steps of ribosome biogenesis. In Enterococcus faecalis (strain ATCC 700802 / V583), this protein is GTPase Der.